A 269-amino-acid chain; its full sequence is Prespore protein Dd31 (269 aa).

Polar residues predominate over residues 1-17; it reads MEHNNNPGTPQMSSEFP. The segment at 1-35 is disordered; the sequence is MEHNNNPGTPQMSSEFPASTTQTSSSAAAYDNSSH. A compositionally biased stretch (low complexity) spans 18–29; the sequence is ASTTQTSSSAAA. 4 consecutive transmembrane segments (helical) span residues 111 to 131, 139 to 159, 177 to 197, and 225 to 245; these read FGIF…VVSI, VDNF…LYFL, YAYL…FVGF, and VSLF…IMYL.

It belongs to the SCAMP family.

The protein resides in the membrane. The protein localises to the spore coat. The polypeptide is Prespore protein Dd31 (spiA) (Dictyostelium discoideum (Social amoeba)).